The primary structure comprises 624 residues: 1-deoxy-D-xylulose-5-phosphate synthase (624 aa).

Residues histidine 74 and 115–117 (GHS) each bind thiamine diphosphate. Aspartate 146 serves as a coordination point for Mg(2+). Thiamine diphosphate is bound by residues 147-148 (GA), asparagine 175, tyrosine 286, and glutamate 367. Asparagine 175 lines the Mg(2+) pocket.

It belongs to the transketolase family. DXPS subfamily. As to quaternary structure, homodimer. The cofactor is Mg(2+). Thiamine diphosphate is required as a cofactor.

It carries out the reaction D-glyceraldehyde 3-phosphate + pyruvate + H(+) = 1-deoxy-D-xylulose 5-phosphate + CO2. Its pathway is metabolic intermediate biosynthesis; 1-deoxy-D-xylulose 5-phosphate biosynthesis; 1-deoxy-D-xylulose 5-phosphate from D-glyceraldehyde 3-phosphate and pyruvate: step 1/1. Its function is as follows. Catalyzes the acyloin condensation reaction between C atoms 2 and 3 of pyruvate and glyceraldehyde 3-phosphate to yield 1-deoxy-D-xylulose-5-phosphate (DXP). The protein is 1-deoxy-D-xylulose-5-phosphate synthase of Alkaliphilus oremlandii (strain OhILAs) (Clostridium oremlandii (strain OhILAs)).